The primary structure comprises 276 residues: Acetyl-coenzyme A carboxylase carboxyl transferase subunit beta (276 aa).

In terms of domain architecture, CoA carboxyltransferase N-terminal spans 24–276 (LWRECSNCHE…NNLLNLHSDK (253 aa)). Zn(2+) is bound by residues C28, C31, C46, and C49. A C4-type zinc finger spans residues 28-49 (CSNCHEKFYYRRAGVYEVCPNC).

This sequence belongs to the AccD/PCCB family. Acetyl-CoA carboxylase is a heterohexamer composed of biotin carboxyl carrier protein (AccB), biotin carboxylase (AccC) and two subunits each of ACCase subunit alpha (AccA) and ACCase subunit beta (AccD). Requires Zn(2+) as cofactor.

The protein localises to the cytoplasm. The enzyme catalyses N(6)-carboxybiotinyl-L-lysyl-[protein] + acetyl-CoA = N(6)-biotinyl-L-lysyl-[protein] + malonyl-CoA. It functions in the pathway lipid metabolism; malonyl-CoA biosynthesis; malonyl-CoA from acetyl-CoA: step 1/1. Functionally, component of the acetyl coenzyme A carboxylase (ACC) complex. Biotin carboxylase (BC) catalyzes the carboxylation of biotin on its carrier protein (BCCP) and then the CO(2) group is transferred by the transcarboxylase to acetyl-CoA to form malonyl-CoA. The sequence is that of Acetyl-coenzyme A carboxylase carboxyl transferase subunit beta from Pediococcus pentosaceus (strain ATCC 25745 / CCUG 21536 / LMG 10740 / 183-1w).